Reading from the N-terminus, the 227-residue chain is RNA pyrophosphohydrolase (227 aa).

One can recognise a Nudix hydrolase domain in the interval 6–149 (GFRPNVGIIL…KRDVYQMALT (144 aa)). The Nudix box signature appears at 38–59 (GGIKYGETPEQAMYRELHEEIG). The segment at 165–227 (PYGTHGAHGA…PVSTTRSTDD (63 aa)) is disordered. The segment covering 192–201 (AQAAQQADAD) has biased composition (low complexity). Polar residues predominate over residues 217-227 (TPVSTTRSTDD).

Belongs to the Nudix hydrolase family. RppH subfamily. Requires a divalent metal cation as cofactor.

Its function is as follows. Accelerates the degradation of transcripts by removing pyrophosphate from the 5'-end of triphosphorylated RNA, leading to a more labile monophosphorylated state that can stimulate subsequent ribonuclease cleavage. This Cupriavidus taiwanensis (strain DSM 17343 / BCRC 17206 / CCUG 44338 / CIP 107171 / LMG 19424 / R1) (Ralstonia taiwanensis (strain LMG 19424)) protein is RNA pyrophosphohydrolase.